Reading from the N-terminus, the 272-residue chain is Octanoyltransferase (272 aa).

Positions 1 to 12 (MQQDPPTSQPHT) are enriched in polar residues. The tract at residues 1 to 20 (MQQDPPTSQPHTPQIVDGVK) is disordered. One can recognise a BPL/LPL catalytic domain in the interval 65–255 (HQRPNTVIYV…EMMSFQPYEM (191 aa)). Substrate-binding positions include 103–110 (RGGEITWH), 175–177 (AIG), and 188–190 (GFA). Residue C206 is the Acyl-thioester intermediate of the active site.

The protein belongs to the LipB family.

It is found in the cytoplasm. It catalyses the reaction octanoyl-[ACP] + L-lysyl-[protein] = N(6)-octanoyl-L-lysyl-[protein] + holo-[ACP] + H(+). The protein operates within protein modification; protein lipoylation via endogenous pathway; protein N(6)-(lipoyl)lysine from octanoyl-[acyl-carrier-protein]: step 1/2. In terms of biological role, catalyzes the transfer of endogenously produced octanoic acid from octanoyl-acyl-carrier-protein onto the lipoyl domains of lipoate-dependent enzymes. Lipoyl-ACP can also act as a substrate although octanoyl-ACP is likely to be the physiological substrate. The protein is Octanoyltransferase of Cutibacterium acnes (strain DSM 16379 / KPA171202) (Propionibacterium acnes).